Reading from the N-terminus, the 42-residue chain is Photosystem I reaction center subunit IX (42 aa).

The chain crosses the membrane as a helical span at residues 7-27; the sequence is YLSIAPVLATLWFGFLVGSLI.

It belongs to the PsaJ family.

It is found in the plastid membrane. May help in the organization of the PsaE and PsaF subunits. This is Photosystem I reaction center subunit IX from Aneura mirabilis (Parasitic liverwort).